The sequence spans 514 residues: ATP synthase subunit alpha (514 aa).

170 to 177 (GDRQIGKT) contacts ATP.

It belongs to the ATPase alpha/beta chains family. In terms of assembly, F-type ATPases have 2 components, CF(1) - the catalytic core - and CF(0) - the membrane proton channel. CF(1) has five subunits: alpha(3), beta(3), gamma(1), delta(1), epsilon(1). CF(0) has three main subunits: a(1), b(2) and c(9-12). The alpha and beta chains form an alternating ring which encloses part of the gamma chain. CF(1) is attached to CF(0) by a central stalk formed by the gamma and epsilon chains, while a peripheral stalk is formed by the delta and b chains.

The protein localises to the cell inner membrane. It catalyses the reaction ATP + H2O + 4 H(+)(in) = ADP + phosphate + 5 H(+)(out). Its function is as follows. Produces ATP from ADP in the presence of a proton gradient across the membrane. The alpha chain is a regulatory subunit. The chain is ATP synthase subunit alpha from Pseudomonas putida (strain W619).